The chain runs to 143 residues: Large ribosomal subunit protein uL11 (143 aa).

Belongs to the universal ribosomal protein uL11 family. As to quaternary structure, part of the ribosomal stalk of the 50S ribosomal subunit. Interacts with L10 and the large rRNA to form the base of the stalk. L10 forms an elongated spine to which L12 dimers bind in a sequential fashion forming a multimeric L10(L12)X complex. One or more lysine residues are methylated.

Forms part of the ribosomal stalk which helps the ribosome interact with GTP-bound translation factors. This chain is Large ribosomal subunit protein uL11, found in Bordetella pertussis (strain Tohama I / ATCC BAA-589 / NCTC 13251).